The primary structure comprises 245 residues: Orotidine 5'-phosphate decarboxylase (245 aa).

Substrate is bound by residues D22, K44, 71–80 (DLKFHDIPNT), T131, R192, Q201, G221, and R222. K73 functions as the Proton donor in the catalytic mechanism.

The protein belongs to the OMP decarboxylase family. Type 1 subfamily. In terms of assembly, homodimer.

The catalysed reaction is orotidine 5'-phosphate + H(+) = UMP + CO2. The protein operates within pyrimidine metabolism; UMP biosynthesis via de novo pathway; UMP from orotate: step 2/2. In terms of biological role, catalyzes the decarboxylation of orotidine 5'-monophosphate (OMP) to uridine 5'-monophosphate (UMP). The polypeptide is Orotidine 5'-phosphate decarboxylase (Yersinia pseudotuberculosis serotype O:1b (strain IP 31758)).